Reading from the N-terminus, the 129-residue chain is Glycine cleavage system H protein (129 aa).

Positions 24–106 (SYTVGITEHA…FGDGWFFRVM (83 aa)) constitute a Lipoyl-binding domain. Lysine 65 bears the N6-lipoyllysine mark.

This sequence belongs to the GcvH family. As to quaternary structure, the glycine cleavage system is composed of four proteins: P, T, L and H. The cofactor is (R)-lipoate.

In terms of biological role, the glycine cleavage system catalyzes the degradation of glycine. The H protein shuttles the methylamine group of glycine from the P protein to the T protein. In Shewanella frigidimarina (strain NCIMB 400), this protein is Glycine cleavage system H protein.